Here is a 311-residue protein sequence, read N- to C-terminus: MNKNPFIVCLMGPTASGKTDLAIALARKLPFEIISVDSAMVYRGLDIGTAKPNEEELQLTSHRLINICDPSFPYSAGQFYKDALSEIKTIEIRNRTPLLVGGTMLYFHILEQGFSDLPTADETVRKKIQEEAAQHGWAKIHERLNAIDPKSAARINPNDAQRIQRAFEIYETTGQPLSSYQSLKRFKALPYQFINLILAPENRSWLHQRIEKRFDQMLKNNFLEEVRQLYNRGDLNSDLPAIRTVGYRQVWKYLSGEYDYEMMRHKAIAATRQLAKRQLTWLRRWPDAKWFNSEDKDLISQVVDYLKGIGM.

Residue 12 to 19 coordinates ATP; that stretch reads GPTASGKT. 14 to 19 provides a ligand contact to substrate; it reads TASGKT. 2 interaction with substrate tRNA regions span residues 37–40 and 161–165; these read DSAM and QRIQR.

It belongs to the IPP transferase family. In terms of assembly, monomer. It depends on Mg(2+) as a cofactor.

It carries out the reaction adenosine(37) in tRNA + dimethylallyl diphosphate = N(6)-dimethylallyladenosine(37) in tRNA + diphosphate. Its function is as follows. Catalyzes the transfer of a dimethylallyl group onto the adenine at position 37 in tRNAs that read codons beginning with uridine, leading to the formation of N6-(dimethylallyl)adenosine (i(6)A). In Coxiella burnetii (strain RSA 331 / Henzerling II), this protein is tRNA dimethylallyltransferase.